Reading from the N-terminus, the 515-residue chain is Alpha-1B adrenergic receptor (515 aa).

Over 1–45 the chain is Extracellular; that stretch reads MNPDLDTGHNTSAPAQWGELKDANFTGPNQTSSNSTLPQLDVTRA. Asparagine 10, asparagine 24, and asparagine 34 each carry an N-linked (GlcNAc...) asparagine glycan. Residues 46 to 70 traverse the membrane as a helical segment; that stretch reads ISVGLVLGAFILFAIVGNILVILSV. The Cytoplasmic portion of the chain corresponds to 71-83; it reads ACNRHLRTPTNYF. A helical membrane pass occupies residues 84–105; it reads IVNLAIADLLLSFTVLPFSATL. Residues 106 to 115 lie on the Extracellular side of the membrane; sequence EVLGYWVLGR. Residues 116 to 141 form a helical membrane-spanning segment; sequence IFCDIWAAVDVLCCTASILSLCAISI. Cysteines 118 and 195 form a disulfide. Topologically, residues 142 to 161 are cytoplasmic; that stretch reads DRYIGVRYSLQYPTLVTRRK. Residues 162 to 184 form a helical membrane-spanning segment; the sequence is AILALLSVWVLSTVISIGPLLGW. Over 185–201 the chain is Extracellular; that stretch reads KEPAPNDDKECGVTEEP. A helical membrane pass occupies residues 202–224; it reads FYALFSSLGSFYIPLAVILVMYC. Residues 225–295 lie on the Cytoplasmic side of the membrane; the sequence is RVYIVAKRTT…FSREKKAAKT (71 aa). Position 264 is a phosphothreonine (threonine 264). Residues 296–319 form a helical membrane-spanning segment; it reads LGIVVGMFILCWLPFFIALPLGSL. Topologically, residues 320–326 are extracellular; sequence FSTLKPP. Residues 327 to 351 form a helical membrane-spanning segment; the sequence is DAVFKVVFWLGYFNSCLNPIIYPCS. Residues 352 to 515 lie on the Cytoplasmic side of the membrane; that stretch reads SKEFKRAFMR…SNMPLAPGHF (164 aa). Cysteine 365 carries the S-palmitoyl cysteine lipid modification. Residues 368–378 carry the Nuclear localization signal motif; the sequence is RSGRRRRRRRR. Disordered stretches follow at residues 392–428 and 473–515; these read GGSL…SPGY and LLGE…PGHF. Residues 410–424 are compositionally biased toward polar residues; sequence SCMSGSQRTLPSASP.

The protein belongs to the G-protein coupled receptor 1 family. Adrenergic receptor subfamily. ADRA1B sub-subfamily. As to quaternary structure, homo- and heterooligomer. Heterooligomerizes with ADRA1B homooligomers in cardiac myocytes. Interacts with CAVIN4.

Its subcellular location is the nucleus membrane. The protein localises to the cell membrane. It localises to the cytoplasm. It is found in the membrane. The protein resides in the caveola. In terms of biological role, this alpha-adrenergic receptor mediates its action by association with G proteins that activate a phosphatidylinositol-calcium second messenger system. Its effect is mediated by G(q) and G(11) proteins. Nuclear ADRA1A-ADRA1B heterooligomers regulate phenylephrine (PE)-stimulated ERK signaling in cardiac myocytes. The polypeptide is Alpha-1B adrenergic receptor (ADRA1B) (Mesocricetus auratus (Golden hamster)).